We begin with the raw amino-acid sequence, 397 residues long: Terminase A protein (397 aa).

Over residues 43–53 (KEDTRTADSRK) the composition is skewed to basic and acidic residues. Disordered stretches follow at residues 43 to 62 (KEDT…RKPL), 304 to 325 (PKTN…LEDL), and 356 to 397 (DTGG…GDDD). Residues 374–387 (LEQDLDEDEEEDEE) are compositionally biased toward acidic residues. Residues 388–397 (VTRKLYGDDD) are compositionally biased toward basic and acidic residues.

Multimer of two distinct subunits.

Its function is as follows. Necessary for recognition and cleavage of the phage packaging site (pac), together with the pacB protein. Both are probably the two major subunits of the phage PACase. The protein is Terminase A protein (pacA) of Escherichia coli (Bacteriophage P7).